A 415-amino-acid polypeptide reads, in one-letter code: Arrestin red cell isoform 3 (415 aa).

The protein belongs to the arrestin family.

It localises to the cytoplasm. In Oncorhynchus mykiss (Rainbow trout), this protein is Arrestin red cell isoform 3.